The chain runs to 134 residues: Kinetochore-binding protein 3 (134 aa).

It is found in the nucleus. Its subcellular location is the chromosome. The protein localises to the centromere. The protein resides in the kinetochore. The sequence is that of Kinetochore-binding protein 3 (kbp-3) from Caenorhabditis elegans.